The following is a 338-amino-acid chain: Aspartate carbamoyltransferase catalytic subunit (338 aa).

Carbamoyl phosphate is bound by residues Arg-72 and Thr-73. An L-aspartate-binding site is contributed by Lys-100. 3 residues coordinate carbamoyl phosphate: Arg-122, His-152, and Gln-155. Residues Arg-186 and Arg-243 each contribute to the L-aspartate site. Carbamoyl phosphate is bound by residues Gly-284 and Pro-285.

This sequence belongs to the aspartate/ornithine carbamoyltransferase superfamily. ATCase family. In terms of assembly, heterododecamer (2C3:3R2) of six catalytic PyrB chains organized as two trimers (C3), and six regulatory PyrI chains organized as three dimers (R2).

The enzyme catalyses carbamoyl phosphate + L-aspartate = N-carbamoyl-L-aspartate + phosphate + H(+). The protein operates within pyrimidine metabolism; UMP biosynthesis via de novo pathway; (S)-dihydroorotate from bicarbonate: step 2/3. Its function is as follows. Catalyzes the condensation of carbamoyl phosphate and aspartate to form carbamoyl aspartate and inorganic phosphate, the committed step in the de novo pyrimidine nucleotide biosynthesis pathway. This Acinetobacter baumannii (strain SDF) protein is Aspartate carbamoyltransferase catalytic subunit.